The chain runs to 105 residues: Large ribosomal subunit protein uL24 (105 aa).

Belongs to the universal ribosomal protein uL24 family. Part of the 50S ribosomal subunit.

In terms of biological role, one of two assembly initiator proteins, it binds directly to the 5'-end of the 23S rRNA, where it nucleates assembly of the 50S subunit. Its function is as follows. One of the proteins that surrounds the polypeptide exit tunnel on the outside of the subunit. The polypeptide is Large ribosomal subunit protein uL24 (Thermotoga maritima (strain ATCC 43589 / DSM 3109 / JCM 10099 / NBRC 100826 / MSB8)).